The sequence spans 557 residues: Probable protein kinase UbiB (557 aa).

The region spanning 121–509 is the Protein kinase domain; it reads SFDTVPLASA…RKLQTRVVTA (389 aa). ATP-binding positions include 127 to 135 and K154; that span reads LASASIAQV. D289 acts as the Proton acceptor in catalysis. A run of 2 helical transmembrane segments spans residues 506–526 and 535–555; these read VVTAITGSGLLVVAAVLYGLH and VPVWSWISGGAGSAALLVAWL.

This sequence belongs to the ABC1 family. UbiB subfamily.

It localises to the cell inner membrane. It participates in cofactor biosynthesis; ubiquinone biosynthesis [regulation]. Its function is as follows. Is probably a protein kinase regulator of UbiI activity which is involved in aerobic coenzyme Q (ubiquinone) biosynthesis. The chain is Probable protein kinase UbiB from Xanthomonas axonopodis pv. citri (strain 306).